The chain runs to 309 residues: MSSLRTDNDTWDIASSVGATAVMVAAARAAETERPEPLIDDPYAKILVAGAGNGAWQYIADDGFVAKVTESDPEIGPLFEHMKNYQAVRTHFFDAFFAAAVDAGIRQIVILASGLDSRAFRLPWPAGTTVFEIDQPLVLAYKSSTLASHGVQPTADRREVPIDLRQDWPTALTHAGFDADQPTAWLAEGLLMYLPADAQDRLFAQITELSAPGSRVAAESMGIHAQDRRERMRERFASITAQFDVEPMDITELTYEDPDRADVAQWLTAHGWRAEAVPSQDEMRRLHRLVEIADGDDQSFSTFTTAVKR.

S-adenosyl-L-methionine-binding positions include Asp134 and 163–164 (DL).

Belongs to the UPF0677 family.

In terms of biological role, exhibits S-adenosyl-L-methionine-dependent methyltransferase activity. In Mycolicibacterium vanbaalenii (strain DSM 7251 / JCM 13017 / BCRC 16820 / KCTC 9966 / NRRL B-24157 / PYR-1) (Mycobacterium vanbaalenii), this protein is Putative S-adenosyl-L-methionine-dependent methyltransferase Mvan_0104.